A 387-amino-acid polypeptide reads, in one-letter code: Exodeoxyribonuclease 7 large subunit (387 aa).

This sequence belongs to the XseA family. In terms of assembly, heterooligomer composed of large and small subunits.

The protein resides in the cytoplasm. It catalyses the reaction Exonucleolytic cleavage in either 5'- to 3'- or 3'- to 5'-direction to yield nucleoside 5'-phosphates.. In terms of biological role, bidirectionally degrades single-stranded DNA into large acid-insoluble oligonucleotides, which are then degraded further into small acid-soluble oligonucleotides. The chain is Exodeoxyribonuclease 7 large subunit from Synechococcus sp. (strain CC9902).